A 362-amino-acid chain; its full sequence is Peptide chain release factor 1 (362 aa).

Gln-238 is modified (N5-methylglutamine).

This sequence belongs to the prokaryotic/mitochondrial release factor family. Methylated by PrmC. Methylation increases the termination efficiency of RF1.

Its subcellular location is the cytoplasm. In terms of biological role, peptide chain release factor 1 directs the termination of translation in response to the peptide chain termination codons UAG and UAA. The protein is Peptide chain release factor 1 of Psychrobacter arcticus (strain DSM 17307 / VKM B-2377 / 273-4).